A 335-amino-acid chain; its full sequence is MTRTANEFLTPQAIKVEAVSGTSAKVILEPLERGFGHTLGNALRRILLSSLPGAAVVEVEIEGVEHEYSTLEGLQQDIVELLLNLKGLSIKLFDQNEAYLTLEKQGPGDITAADLRLPHNVEVVNPEHLIGTLSASGSIKMRLKVSQGRGYETSDSRFPEGETRPVGRLQLDASYSPIKRVSYTVENARVEQRTDLDKLVIDLETNGTVDPEEAIRKAATILQQQIAIFVDLQKDQAPVAQEPREEVDPILLRPVDDLELTVRSANCLKAENIYYIGDLVQRTEVELLKTPNLGKKSLTEIKDVLASKGLQLGMRLENWPPASLRMDDRFAYRSR.

Residues 1 to 233 (MTRTANEFLT…QQIAIFVDLQ (233 aa)) are alpha N-terminal domain (alpha-NTD). Residues 247 to 335 (VDPILLRPVD…MDDRFAYRSR (89 aa)) form an alpha C-terminal domain (alpha-CTD) region.

This sequence belongs to the RNA polymerase alpha chain family. Homodimer. The RNAP catalytic core consists of 2 alpha, 1 beta, 1 beta' and 1 omega subunit. When a sigma factor is associated with the core the holoenzyme is formed, which can initiate transcription.

It carries out the reaction RNA(n) + a ribonucleoside 5'-triphosphate = RNA(n+1) + diphosphate. Functionally, DNA-dependent RNA polymerase catalyzes the transcription of DNA into RNA using the four ribonucleoside triphosphates as substrates. The protein is DNA-directed RNA polymerase subunit alpha of Acinetobacter baylyi (strain ATCC 33305 / BD413 / ADP1).